Reading from the N-terminus, the 495-residue chain is Bile acid-sensitive ion channel (495 aa).

Positions 1–30 are binds the plasma membrane and stabilizes the channel in the closed state; it reads MEHTEKSQVHAEKGLLGKIKRYLSKRPLPS. Residues 1–61 are Cytoplasmic-facing; sequence MEHTEKSQVH…NIAQNQNKVR (61 aa). Residues 62-82 form a helical membrane-spanning segment; the sequence is KVIWLAVVLGSVSLLVWQIYS. The Extracellular segment spans residues 83 to 459; the sequence is RLVNYFTWPT…GLFCGASLIT (377 aa). 6 disulfide bridges follow: Cys-112/Cys-207, Cys-185/Cys-192, Cys-298/Cys-377, Cys-315/Cys-373, Cys-328/Cys-350, and Cys-330/Cys-342. N-linked (GlcNAc...) asparagine glycosylation is found at Asn-147, Asn-163, and Asn-179. Asn-370, Asn-405, and Asn-421 each carry an N-linked (GlcNAc...) asparagine glycan. The GAS motif; ion selectivity filter motif lies at 454-456; sequence GAS. The chain crosses the membrane as a helical span at residues 460-480; it reads IIEIIEYFFTNFYWVLIFFLL. The Cytoplasmic portion of the chain corresponds to 481 to 495; sequence KILETIQRTSPPQAV.

The protein belongs to the amiloride-sensitive sodium channel (TC 1.A.6) family. ASIC5 subfamily. As to quaternary structure, forms homotrimeric channels. In terms of tissue distribution, expressed by cholangiocytes (at protein level). Detected in cerebellum, brainstem, kidney, liver, hepatocytes, lung, intestine and embryo. In the cerebellum, restricted to interneurons in the granular layer, specifically in GRM1-expressing unipolar brush cells of the vestibulocerebellum.

It is found in the apical cell membrane. The protein resides in the cell membrane. The catalysed reaction is Na(+)(in) = Na(+)(out). It carries out the reaction Li(+)(in) = Li(+)(out). The enzyme catalyses K(+)(in) = K(+)(out). It catalyses the reaction H(+)(in) = H(+)(out). Inhibited by the diuretic drug amiloride. Contrary to its rat ortholog it is not inhibited by Ca(2+). In terms of biological role, forms bile acid-gated sodium channels and may play a role in bile acid-dependent absorption and secretion by epithelial cells of the bile ducts. Displays high selectivity for sodium ions but can also permit the permeation of other cations. The gating could be indirect and the consequence of alterations of the membrane environment of the channel by bile acids. As a sodium channel of type II unipolar brush cells of the vestibulocerebellum, controlling the electrical activity of these cells, could play a role in motor coordination and balance. This Mus musculus (Mouse) protein is Bile acid-sensitive ion channel.